A 1206-amino-acid polypeptide reads, in one-letter code: Translocase of chloroplast 132, chloroplastic (1206 aa).

Gly2 carries the post-translational modification N-acetylglycine. Positions 13-33 (REDKKLAEDRISDEQVVKNEL) form a coiled coil. Disordered stretches follow at residues 33-75 (LVRS…SDDL) and 97-119 (VGDLDETSSNEGGVKDFTAVGES). Residues 39–49 (VRDDNEDEVFE) show a composition bias toward acidic residues. A Phosphoserine modification is found at Ser195. The segment at 233-499 (QTEQEVEEGE…TTTEADEHDE (267 aa)) is disordered. Polar residues predominate over residues 309 to 324 (AYTSNIVTNASGDNEV). Residues 325–336 (SSAVTSSPLEES) are compositionally biased toward low complexity. Phosphoserine occurs at positions 337, 363, and 398. Residues 357 to 379 (LASSPHSYPESTEVHSNSGSPGV) show a composition bias toward polar residues. A compositionally biased stretch (basic and acidic residues) spans 403-427 (KELEKQQSSRVHVDPEITENSHVET). Residues 430–440 (EVVSSVSPTES) show a composition bias toward low complexity. A compositionally biased stretch (polar residues) spans 468–492 (APQQSRVNGNGSHNQFQQAEDSTTT). An AIG1-type G domain is found at 572–801 (DFSCTIMVLG…KLQDNIPGRP (230 aa)). Residues 581–588 (GKSGVGKS) are G1. Residues 584–589 (GVGKSA) and 603–608 (DAFQMG) each bind GTP. Ser588 lines the Mg(2+) pocket. The interval 603–606 (DAFQ) is homodimerization. The G2 stretch occupies residues 607–611 (MGTKR). A G3 region spans residues 628-631 (DTPG). Residues 666–671 (RLDMQS) form a homodimerization region. Residues 700–703 (THAA) form a G4 region. GTP-binding positions include His701 and 749–750 (EN). The segment at 749–751 (ENH) is G5. Residues 824-862 (QPKLPEQQYGDEEDEDDLEESSDSDEESEYDQLPPFKSL) are disordered. Acidic residues predominate over residues 832–853 (YGDEEDEDDLEESSDSDEESEY). Residues 1182–1199 (LAMVAIVPLFKKLLSYYY) traverse the membrane as a helical segment.

Belongs to the TRAFAC class TrmE-Era-EngA-EngB-Septin-like GTPase superfamily. AIG1/Toc34/Toc159-like paraseptin GTPase family. TOC159 subfamily. Homodimer. Part of the TOC core complex that includes 1 protein for the specific recognition of transit peptides surrounded by a ring composed of four proteins forming translocation channels, and four to five GTP-binding proteins providing energy. This core complex can interact with components of the TIC complex to form a larger import complex. Chloroplastic protein precursor such as prSS (precursor of the RuBisCO small subunit) interacts with these complexes. The TOC complex contains a specific subset of polar lipids such as digalactosyldiacylglyceride (DGDG), phosphatidylcholine (PC) and phosphatidylglycerol (PG). Mg(2+) is required as a cofactor. Phosphorylated by KOC1. Expressed in seedlings, leaves, flowers, and roots.

It localises to the plastid. It is found in the chloroplast outer membrane. The protein localises to the cytoplasm. In terms of biological role, GTPase involved in protein precursor import into chloroplasts. Seems to recognize chloroplast-destined precursor proteins and regulate their presentation to the translocation channel through GTP hydrolysis. Probably specialized in the import of nuclear encoded non-photosynthetic preproteins from the cytoplasm to the chloroplast. The chain is Translocase of chloroplast 132, chloroplastic from Arabidopsis thaliana (Mouse-ear cress).